The following is a 208-amino-acid chain: Imidazoleglycerol-phosphate dehydratase (208 aa).

Belongs to the imidazoleglycerol-phosphate dehydratase family.

It is found in the cytoplasm. It carries out the reaction D-erythro-1-(imidazol-4-yl)glycerol 3-phosphate = 3-(imidazol-4-yl)-2-oxopropyl phosphate + H2O. It functions in the pathway amino-acid biosynthesis; L-histidine biosynthesis; L-histidine from 5-phospho-alpha-D-ribose 1-diphosphate: step 6/9. The polypeptide is Imidazoleglycerol-phosphate dehydratase (Mycobacterium sp. (strain JLS)).